A 776-amino-acid polypeptide reads, in one-letter code: Protocadherin beta-16 (776 aa).

Residues 1-28 form the signal peptide; sequence MEIGWMHNRRQRQVLVFFVLLSLSGAGA. Topologically, residues 29 to 690 are extracellular; the sequence is ELGSYSVVEE…TQANSLTVYL (662 aa). 5 consecutive Cadherin domains span residues 35-133, 138-242, 247-347, 352-451, and 456-561; these read VVEE…SPMF, MILK…APEF, YKVQ…PPQV, LTSP…APTF, and YTLF…SPFV. N-linked (GlcNAc...) asparagine glycans are attached at residues asparagine 418 and asparagine 436. A glycan (N-linked (GlcNAc...) asparagine) is linked at asparagine 567. Residues 568–671 enclose the Cadherin 6 domain; the sequence is GSAPCTELVP…LVDGFSQPFL (104 aa). A helical membrane pass occupies residues 691–711; that stretch reads VVALASVSSLFLFSVLLFVAV. At 712-776 the chain is on the cytoplasmic side; it reads RLCRRSRAAS…LKPIIPNFSP (65 aa).

Its subcellular location is the membrane. Potential calcium-dependent cell-adhesion protein. May be involved in the establishment and maintenance of specific neuronal connections in the brain. The chain is Protocadherin beta-16 from Homo sapiens (Human).